The following is a 95-amino-acid chain: MAHKKGASSSRNGRDSNAQRLGVKRFGGQLVKAGEIIVRQRGTHFHPGDLVGRGKDDTLFALAPGHVEFGRKRGRRVVNIVSADTERAEKAAVPA.

The interval 1 to 21 (MAHKKGASSSRNGRDSNAQRL) is disordered. The segment covering 7–19 (ASSSRNGRDSNAQ) has biased composition (polar residues).

This sequence belongs to the bacterial ribosomal protein bL27 family.

This Parafrankia sp. (strain EAN1pec) protein is Large ribosomal subunit protein bL27.